A 317-amino-acid polypeptide reads, in one-letter code: Epidermal growth factor-like protein (317 aa).

The signal sequence occupies residues 1-23 (MDFKIFLFLTAIFMIVGVTVSTA). A may be required for E.coli agglutination activity region spans residues 24–33 (TTNPTAPRAY). EGF-like domains are found at residues 93-128 (HCTPDCPSGCGLGNCTAPNVCTCNKGAGFGPDGKCI), 130-161 (VCPGRCLNGQCYGNFCNCNSGFVLEPNGRYCT), 163-195 (GCTRNCGPGGQCVGNNQCSCLSGFALNSQGTCQ), 208-243 (ACEPLCPKGCVNGECVAPGQCRCKSGYALNSSKVCA), 245-280 (KCSQPCYNGFCSAPNVCTCKEGYIKDATSRNGNRCI), and 282-315 (YCAAGCPNGTCSAPNFCICKQGYIKQSKGSNVCV). 18 disulfide bridges follow: C98-C107, C102-C113, C115-C127, C131-C140, C135-C145, C147-C160, C164-C174, C168-C180, C182-C194, C213-C222, C217-C228, C230-C242, C246-C255, C250-C261, C263-C279, C283-C292, C287-C298, and C300-C314.

It localises to the secreted. Binds to lipopolysaccharides (LPS) present on the cell walls of Gram-negative bacteria, behaving as a pattern recognition receptor (PRR). Induces bacterial aggregation and enhances their subsequent clearance by the innate immune response. Binds to the inner core oligosaccharides region of rough-type bacterial LPS. Displays activity against the Gram-negative bacterium E.coli. Does not display any activity against the Gram-positive bacterium S.aureus or the fungi C.albicans. This Holotrichia diomphalia (Korean black chafer) protein is Epidermal growth factor-like protein.